Consider the following 293-residue polypeptide: Acetylglutamate kinase (293 aa).

Residues glycine 68–glycine 69, arginine 90, and asparagine 189 each bind substrate.

This sequence belongs to the acetylglutamate kinase family. ArgB subfamily.

The protein resides in the cytoplasm. It carries out the reaction N-acetyl-L-glutamate + ATP = N-acetyl-L-glutamyl 5-phosphate + ADP. It functions in the pathway amino-acid biosynthesis; L-arginine biosynthesis; N(2)-acetyl-L-ornithine from L-glutamate: step 2/4. Functionally, catalyzes the ATP-dependent phosphorylation of N-acetyl-L-glutamate. The protein is Acetylglutamate kinase of Caldicellulosiruptor bescii (strain ATCC BAA-1888 / DSM 6725 / KCTC 15123 / Z-1320) (Anaerocellum thermophilum).